The sequence spans 403 residues: Tryptophan 2,3-dioxygenase (403 aa).

69-73 contacts substrate; that stretch reads FIVIH. The PLD motif; required for enzymatic activity signature appears at 133–135; that stretch reads PLD. A substrate-binding site is contributed by Arg-140. Heme is bound at residue His-327. Thr-341 is a binding site for substrate.

This sequence belongs to the tryptophan 2,3-dioxygenase family. As to quaternary structure, homotetramer. Dimer of dimers. Heme serves as cofactor. In terms of tissue distribution, expressed in body wall muscle cells, hypodermis, PLM neurons and touch-receptor neurons.

It carries out the reaction L-tryptophan + O2 = N-formyl-L-kynurenine. It participates in amino-acid degradation; L-tryptophan degradation via kynurenine pathway; L-kynurenine from L-tryptophan: step 1/2. Functionally, heme-dependent dioxygenase that catalyzes the oxidative cleavage of the L-tryptophan (L-Trp) pyrrole ring and converts L-tryptophan to N-formyl-L-kynurenine. Catalyzes the oxidative cleavage of the indole moiety. Involved in regulation of protein homeostasis, longevity and reproducive life span. Specifically regulates proteotoxicity due to age-related aggregation of proteins like alpha-synuclein, via its effects on tryptophan metabolism. The chain is Tryptophan 2,3-dioxygenase from Caenorhabditis elegans.